The following is a 694-amino-acid chain: Elongation factor G (694 aa).

Residues 8–287 (EDYRNFGIMA…AVVEFLPAPT (280 aa)) form the tr-type G domain. Residues 17 to 24 (AHIDAGKT), 86 to 90 (DTPGH), and 140 to 143 (NKMD) each bind GTP.

The protein belongs to the TRAFAC class translation factor GTPase superfamily. Classic translation factor GTPase family. EF-G/EF-2 subfamily.

Its subcellular location is the cytoplasm. Catalyzes the GTP-dependent ribosomal translocation step during translation elongation. During this step, the ribosome changes from the pre-translocational (PRE) to the post-translocational (POST) state as the newly formed A-site-bound peptidyl-tRNA and P-site-bound deacylated tRNA move to the P and E sites, respectively. Catalyzes the coordinated movement of the two tRNA molecules, the mRNA and conformational changes in the ribosome. This chain is Elongation factor G, found in Brucella suis (strain ATCC 23445 / NCTC 10510).